Here is a 770-residue protein sequence, read N- to C-terminus: ARF GTPase-activating protein GIT1 (770 aa).

In terms of domain architecture, Arf-GAP spans methionine 1–aspartate 124. The interval methionine 1 to aspartate 124 is interaction with gamma-tubulin and localization to the centrosome. The segment at cysteine 11–cysteine 34 adopts a C4-type zinc-finger fold. ANK repeat units follow at residues aspartate 132–phenylalanine 161, lysine 166–serine 195, and asparagine 199–aspartate 228. Phosphotyrosine is present on tyrosine 224. The interaction with PCLO stretch occupies residues histidine 245–aspartate 374. Positions aspartate 253–aspartate 424 are interaction with PTK2/FAK1. The segment at arginine 254–leucine 376 is interaction with ARHGEF7. Positions arginine 363–leucine 425 are disordered. Residues glycine 366–glutamine 383 are compositionally biased toward polar residues. Phosphoserine occurs at positions 368 and 371. Threonine 373 carries the phosphothreonine modification. Residues asparagine 375 to leucine 596 are interaction with NCK2 and GRIN3A. Positions asparagine 375–leucine 596 are required for localization at synapses. A phosphoserine mark is found at serine 379 and serine 384. Tyrosine 392 carries the post-translational modification Phosphotyrosine. Residues serine 394 and serine 397 each carry the phosphoserine modification. A compositionally biased stretch (acidic residues) spans serine 394–glutamine 403. The residue at position 401 (threonine 401) is a Phosphothreonine. A phosphoserine mark is found at serine 419, serine 422, and serine 426. Positions methionine 420–alanine 475 are interaction with MAPK1. The interval alanine 429–lysine 629 is interaction with IKBKG. A coiled-coil region spans residues valine 449–proline 483. 2 positions are modified to phosphoserine: serine 507 and serine 545. A Phosphothreonine modification is found at threonine 546. A phosphotyrosine mark is found at tyrosine 554 and tyrosine 563. Serine 570, serine 580, serine 601, and serine 605 each carry phosphoserine. Residues proline 578–glutamate 588 show a composition bias toward polar residues. The interval proline 578–proline 615 is disordered. Threonine 610 is subject to Phosphothreonine. Serine 639 is subject to Phosphoserine. Positions proline 646–glutamine 770 are interaction with PXN and TGFB1I1.

In terms of assembly, forms homodimers and possibly oligomers. May forms heterooligomers with GIT2. Interacts with G protein-coupled receptor kinases, including GRK2, GRK3, GRK5 and GRK6. Interacts with PPFIA1, PPFIA2 and PPFIA4. Interacts with GRIP1 and forms a ternary complex with PPFIA1 and GRIP1. Directly interacts with ARHGEF7/beta-PIX, forming in vitro a heptameric complex made of a GIT1 dimer and an ARHGEF7 trimer. Directly interacts with PXN/paxillin; this interaction is enhanced in the presence of ARHGEF7. Directly interacts (via C-terminus) with TGFB1I1/Hic-5 (via LD motif 3). Directly interacts with PTK2/FAK1. May interact with PTK2B/PYK2; this interaction may be indirect. Interacts with AMPA receptors GRIA2/3. Directly interacts with protein Piccolo/PCLO. Forms a complex with Ephrin-B1/EFNB1 and NCK2/GRB4 (via SH2); this interaction is important for spine morphogenesis and synapse formation. Interaction with NCK2 is transient and depends upon GIT1 phosphorylation at Tyr-392. Interacts with GRIN3A/GluN3A (via C-terminus); this interaction competes with GIT1 interaction with ARHGEF7 and limits synaptic localization of GIT1. Interacts with IKBKG/NEMO in resting bone mesenchymal stem cells, as well as in TNF-stimulated cells; this interaction may increase IKBKG affinity for 'Lys-63'-linked polyubiquitin chains. Interacts with GABA(A) receptors, including GABRB3 and GABRG2. Interacts with SCRIB. Interacts (via N- and C-terminus) with ENTR1/SDCCAG3 (via N-terminus); this interaction is direct. May form a tripartite complex with ENTR1 and PTPN13. Interacts with YWHAZ. Interacts with PAK1. Interacts with PAK3. Directly interacts (via N-terminus) with gamma-tubulin. Interacts with MAPK1 and MAPK3; this interaction is required for MAPK1/3 recruitment to focal adhesions. Phosphorylated on tyrosine residues by PTK2/FAK1 and SRC in growing fibroblasts. Phosphorylation at Tyr-392 is induced by activation of Ephrin-B1/EFNB1 and catalyzed by SRC family kinases. It is required for the interaction with NCK2 and for GIT1 recruitment to synapses in hippocampal neurons. Expressed in the brain (at protein level). Also expressed at high levels in lung and heart. In lung, expressed in endothelial cells, especially in capillaries; also expressed in smooth muscle and epithelial cells of bronchi (at protein level). Expressed in bone marrow mesenchymal stem cells, as well as in osteoclasts and bone marrow-derived macrophages (at protein level).

Its subcellular location is the cytoplasm. It localises to the presynapse. The protein resides in the postsynapse. It is found in the postsynaptic density. The protein localises to the cell junction. Its subcellular location is the focal adhesion. It localises to the cell projection. The protein resides in the lamellipodium. It is found in the cytoskeleton. The protein localises to the microtubule organizing center. Its subcellular location is the centrosome. It localises to the spindle pole. GTPase-activating protein for ADP ribosylation factor family members, including ARF1. Multidomain scaffold protein that interacts with numerous proteins and therefore participates in many cellular functions, including receptor internalization, focal adhesion remodeling, and signaling by both G protein-coupled receptors and tyrosine kinase receptors. Through PAK1 activation, positively regulates microtubule nucleation during interphase. Plays a role in the regulation of cytokinesis; for this function, may act in a pathway also involving ENTR1 and PTPN13. May promote cell motility both by regulating focal complex dynamics and by the activation of RAC1. May act as scaffold for MAPK1/3 signal transduction, recruiting MAPK1/3 to focal adhesions after EGF stimulation via a Src-dependent pathway, hence stimulating cell migration. Plays a role in brain development and function. Involved in the regulation of spine density and synaptic plasticity that is required for processes involved in learning. Plays an important role in dendritic spine morphogenesis and synapse formation. In hippocampal neurons, recruits guanine nucleotide exchange factors (GEFs), such as ARHGEF7/beta-PIX, to the synaptic membrane. These in turn locally activate RAC1, which is an essential step for spine morphogenesis and synapse formation. May contribute to the organization of presynaptic active zones through oligomerization and formation of a Piccolo/PCLO-based protein network, which includes ARHGEF7/beta-PIX and FAK1. In neurons, through its interaction with liprin-alpha family members, may be required for AMPA receptor (GRIA2/3) proper targeting to the cell membrane. In complex with GABA(A) receptors and ARHGEF7, plays a crucial role in regulating GABA(A) receptor synaptic stability, maintaining GPHN/gephyrin scaffolds and hence GABAergic inhibitory synaptic transmission, by locally coordinating RAC1 and PAK1 downstream effector activity, leading to F-actin stabilization. May also be important for RAC1 downstream signaling pathway through PAK3 and regulation of neuronal inhibitory transmission at presynaptic input. Required for successful bone regeneration during fracture healing. The function in intramembranous ossification may, at least partly, exerted by macrophages in which GIT1 is a key negative regulator of redox homeostasis, IL1B production, and glycolysis, acting through the ERK1/2/NRF2/NFE2L2 axis. May play a role in angiogenesis during fracture healing. In this process, may regulate activation of the canonical NF-kappa-B signal in bone mesenchymal stem cells by enhancing the interaction between NEMO and 'Lys-63'-ubiquitinated RIPK1/RIP1, eventually leading to enhanced production of VEGFA and others angiogenic factors. Essential for VEGF signaling through the activation of phospholipase C-gamma and ERK1/2, hence may control endothelial cell proliferation and angiogenesis. In Mus musculus (Mouse), this protein is ARF GTPase-activating protein GIT1 (Git1).